A 450-amino-acid chain; its full sequence is Cysteine protease ATG4C (450 aa).

Cysteine 112 serves as the catalytic Nucleophile. Residues aspartate 336 and histidine 338 contribute to the active site.

This sequence belongs to the peptidase C54 family.

The protein localises to the cytoplasm. The catalysed reaction is [protein]-C-terminal L-amino acid-glycyl-phosphatidylethanolamide + H2O = [protein]-C-terminal L-amino acid-glycine + a 1,2-diacyl-sn-glycero-3-phosphoethanolamine. Its function is as follows. Cysteine protease that plays a key role in autophagy by mediating both proteolytic activation and delipidation of ATG8 family proteins. The protease activity is required for proteolytic activation of ATG8 family proteins: cleaves the C-terminal amino acid of ATG8 proteins to reveal a C-terminal glycine. Exposure of the glycine at the C-terminus is essential for ATG8 proteins conjugation to phosphatidylethanolamine (PE) and insertion to membranes, which is necessary for autophagy. In addition to the protease activity, also mediates delipidation of ATG8 family proteins. Catalyzes delipidation of PE-conjugated forms of ATG8 proteins during macroautophagy. The sequence is that of Cysteine protease ATG4C from Xenopus laevis (African clawed frog).